Here is a 192-residue protein sequence, read N- to C-terminus: Adenylate kinase (192 aa).

Residue 10 to 18 coordinates ATP; it reads GVPGVGGTT.

Belongs to the archaeal adenylate kinase family. As to quaternary structure, monomer.

The protein resides in the cytoplasm. It carries out the reaction AMP + ATP = 2 ADP. The protein is Adenylate kinase of Methanococcus maripaludis (strain DSM 14266 / JCM 13030 / NBRC 101832 / S2 / LL).